Consider the following 468-residue polypeptide: MVDTESPICPLSPLEADDLESPLSEEFLQEMGNIQEISQSLGEESSGSFSFADYQYLGSCPGSEGSVITDTLSPASSPSSVSCPAVPTSTDESPGNALNIECRICGDKASGYHYGVHACEGCKGFFRRTIRLKLAYDKCDRSCKIQKKNRNKCQYCRFHKCLSVGMSHNAIRFGRMPRSEKAKLKAEILTCEHDLKDSETADLKSLAKRIHEAYLKNFNMNKVKARVILAGKTSNNPPFVIHDMETLCMAEKTLVAKMVANGVENKEAEVRFFHCCQCMSVETVTELTEFAKAIPGFANLDLNDQVTLLKYGVYEAIFTMLSSLMNKDGMLIAYGNGFITREFLKNLRKPFCDIMEPKFDFAMKFNALELDDSDISLFVAAIICCGDRPGLLNIGYIEKLQEGIVHVLKLHLQSNHPDDTFLFPKLLQKMVDLRQLVTEHAQLVQVIKKTESDAALHPLLQEIYRDMY.

A DNA-binding region (nuclear receptor) is located at residues 99–173 (NIECRICGDK…VGMSHNAIRF (75 aa)). 2 NR C4-type zinc fingers span residues 102–122 (CRIC…CEGC) and 139–161 (CDRS…FHKC). The region spanning 239-466 (FVIHDMETLC…HPLLQEIYRD (228 aa)) is the NR LBD domain. Residues 304-433 (DQVTLLKYGV…PKLLQKMVDL (130 aa)) form a required for heterodimerization with RXRA region.

This sequence belongs to the nuclear hormone receptor family. NR1 subfamily. In terms of assembly, heterodimer; with RXRA. This heterodimerization is required for DNA binding and transactivation activity. Interacts with NCOA3 coactivator. Interacts with CITED2; the interaction stimulates its transcriptional activity. Also interacts with PPARBP in vitro. Interacts with AKAP13, LPIN1, PRDM16 and coactivator NCOA6. Interacts with ASXL1 and ASXL2. Interacts with PER2. Interacts with SIRT1; the interaction seems to be modulated by NAD(+) levels. Interacts with CRY1 and CRY2. In hepatocytes, interacts with PAQR3 and HUWE1; the interactions promote PPARA poylubiquitination and HUWE1-mediated degradation. In terms of processing, phosphorylated. Post-translationally, ubiquitinated by E3 ubiquitin-protein ligase HUWE1; leading to proteasomal degradation. As to expression, expressed predominantly in liver and kidney.

It is found in the nucleus. Its function is as follows. Ligand-activated transcription factor. Key regulator of lipid metabolism. Activated by the endogenous ligand 1-palmitoyl-2-oleoyl-sn-glycerol-3-phosphocholine (16:0/18:1-GPC). Activated by oleylethanolamide, a naturally occurring lipid that regulates satiety. Receptor for peroxisome proliferators such as hypolipidemic drugs and fatty acids. Regulates the peroxisomal beta-oxidation pathway of fatty acids. Functions as a transcription activator for the ACOX1 and P450 genes. Transactivation activity requires heterodimerization with RXRA and is antagonized by NR2C2. May be required for the propagation of clock information to metabolic pathways regulated by PER2. In Rattus norvegicus (Rat), this protein is Peroxisome proliferator-activated receptor alpha (Ppara).